The sequence spans 609 residues: Zinc metalloproteinase-disintegrin-like (609 aa).

An N-terminal signal peptide occupies residues 1 to 20 (MIQVLLVTICLAALPYQGSS). The propeptide occupies 21–189 (IILESGNVND…KKASQLVVTA (169 aa)). The Peptidase M12B domain maps to 198-393 (RFVELVLVVD…QNPECIVNEP (196 aa)). Ca(2+) is bound by residues Glu201 and Asp285. 3 disulfides stabilise this stretch: Cys308-Cys388, Cys348-Cys372, and Cys350-Cys355. Residue His333 coordinates Zn(2+). Glu334 is a catalytic residue. Zn(2+)-binding residues include His337 and His343. Asn371 carries N-linked (GlcNAc...) asparagine glycosylation. Ca(2+) is bound by residues Cys388, Asn391, Val403, Asn406, Leu408, Glu410, Glu413, and Asp416. The 87-residue stretch at 401–487 (PPVCGNELLE…ECPADVFHKN (87 aa)) folds into the Disintegrin domain. Cystine bridges form between Cys404–Cys433, Cys415–Cys428, Cys417–Cys423, Cys427–Cys450, Cys441–Cys447, Cys446–Cys472, Cys459–Cys479, Cys466–Cys498, Cys491–Cys503, Cys510–Cys560, Cys525–Cys571, Cys538–Cys548, Cys555–Cys597, and Cys591–Cys602. The D/ECD-tripeptide signature appears at 465-467 (ECD). Ca(2+)-binding residues include Asp467, Pro468, Glu470, Asp482, and Val483.

Belongs to the venom metalloproteinase (M12B) family. P-III subfamily. P-IIIa sub-subfamily. As to quaternary structure, monomer. It depends on Zn(2+) as a cofactor. As to expression, expressed by the venom gland.

It is found in the secreted. In terms of biological role, this protein is a zinc metalloprotease from snake venom that possesses hemorrhagic activity. This Crotalus durissus durissus (Central American rattlesnake) protein is Zinc metalloproteinase-disintegrin-like.